The chain runs to 257 residues: Triosephosphate isomerase (257 aa).

Substrate is bound by residues Asn12 and Lys14. Residue His98 is the Electrophile of the active site. Glu169 acts as the Proton acceptor in catalysis.

It belongs to the triosephosphate isomerase family. In terms of assembly, homodimer.

The enzyme catalyses D-glyceraldehyde 3-phosphate = dihydroxyacetone phosphate. It functions in the pathway carbohydrate biosynthesis; gluconeogenesis. It participates in carbohydrate degradation; glycolysis; D-glyceraldehyde 3-phosphate from glycerone phosphate: step 1/1. The chain is Triosephosphate isomerase (tpiA) from Dictyostelium discoideum (Social amoeba).